Consider the following 237-residue polypeptide: Oligoribonuclease, mitochondrial (237 aa).

The transit peptide at 1 to 25 directs the protein to the mitochondrion; sequence MLGGSLGSRLLRGVGGTRGQFRARG. The region spanning 43 to 207 is the Exonuclease domain; that stretch reads MVWVDLEMTG…DDISESIKEL (165 aa). Positions 47 and 49 each coordinate Mg(2+). S92 carries the phosphoserine modification. Residue Y122 is modified to Phosphotyrosine. D147 is a binding site for Mg(2+). Position 173 is an N6-acetyllysine (K173). H194 is an active-site residue. D199 lines the Mg(2+) pocket.

Belongs to the oligoribonuclease family. Homodimer. Homotetramer. It depends on Mn(2+) as a cofactor. The cofactor is Mg(2+).

The protein resides in the mitochondrion intermembrane space. Its subcellular location is the mitochondrion matrix. It is found in the mitochondrion. The protein localises to the cytoplasm. It localises to the nucleus. Its function is as follows. 3'-to-5'exoribonuclease that preferentially degrades DNA and RNA oligonucleotides composed of only two nucleotides. Binds and degrades longer oligonucleotides with a lower affinity. Plays dual roles in mitochondria, scavenging nanoRNAs (small RNA oligonucleotides of &lt;5 nucleotides) that are produced by the degradosome and clearing short RNAs that are generated by RNA processing. Essential for correct initiation of mitochondrial transcription, degrading mitochondrial RNA dinucleotides to prevent RNA-primed transcription at non-canonical sites in the mitochondrial genome. Essential for embryonic development. The sequence is that of Oligoribonuclease, mitochondrial (REXO2) from Bos taurus (Bovine).